A 249-amino-acid chain; its full sequence is Ubiquinone biosynthesis O-methyltransferase (249 aa).

Arginine 41, glycine 72, aspartate 93, and methionine 136 together coordinate S-adenosyl-L-methionine.

The protein belongs to the methyltransferase superfamily. UbiG/COQ3 family.

The catalysed reaction is a 3-demethylubiquinol + S-adenosyl-L-methionine = a ubiquinol + S-adenosyl-L-homocysteine + H(+). It catalyses the reaction a 3-(all-trans-polyprenyl)benzene-1,2-diol + S-adenosyl-L-methionine = a 2-methoxy-6-(all-trans-polyprenyl)phenol + S-adenosyl-L-homocysteine + H(+). It functions in the pathway cofactor biosynthesis; ubiquinone biosynthesis. Functionally, O-methyltransferase that catalyzes the 2 O-methylation steps in the ubiquinone biosynthetic pathway. The protein is Ubiquinone biosynthesis O-methyltransferase of Methylobacterium nodulans (strain LMG 21967 / CNCM I-2342 / ORS 2060).